The sequence spans 192 residues: dTTP/UTP pyrophosphatase (192 aa).

Residue Asp68 is the Proton acceptor of the active site.

It belongs to the Maf family. YhdE subfamily. A divalent metal cation serves as cofactor.

The protein localises to the cytoplasm. It carries out the reaction dTTP + H2O = dTMP + diphosphate + H(+). The enzyme catalyses UTP + H2O = UMP + diphosphate + H(+). Nucleoside triphosphate pyrophosphatase that hydrolyzes dTTP and UTP. May have a dual role in cell division arrest and in preventing the incorporation of modified nucleotides into cellular nucleic acids. The chain is dTTP/UTP pyrophosphatase from Cereibacter sphaeroides (strain ATCC 17023 / DSM 158 / JCM 6121 / CCUG 31486 / LMG 2827 / NBRC 12203 / NCIMB 8253 / ATH 2.4.1.) (Rhodobacter sphaeroides).